Here is a 295-residue protein sequence, read N- to C-terminus: Bifunctional protein FolD (295 aa).

NADP(+)-binding positions include 175–177 (GVS) and Ile243.

It belongs to the tetrahydrofolate dehydrogenase/cyclohydrolase family. As to quaternary structure, homodimer.

It carries out the reaction (6R)-5,10-methylene-5,6,7,8-tetrahydrofolate + NADP(+) = (6R)-5,10-methenyltetrahydrofolate + NADPH. It catalyses the reaction (6R)-5,10-methenyltetrahydrofolate + H2O = (6R)-10-formyltetrahydrofolate + H(+). It functions in the pathway one-carbon metabolism; tetrahydrofolate interconversion. In terms of biological role, catalyzes the oxidation of 5,10-methylenetetrahydrofolate to 5,10-methenyltetrahydrofolate and then the hydrolysis of 5,10-methenyltetrahydrofolate to 10-formyltetrahydrofolate. This Xylella fastidiosa (strain 9a5c) protein is Bifunctional protein FolD.